A 390-amino-acid polypeptide reads, in one-letter code: Serpin B3 (390 aa).

Met1 is subject to N-acetylmethionine.

This sequence belongs to the serpin family. Ov-serpin subfamily. Interacts with MAPK8/JNK1. In terms of tissue distribution, squamous cells. Expressed in some hepatocellular carcinoma (at protein level).

It is found in the cytoplasm. May act as a papain-like cysteine protease inhibitor to modulate the host immune response against tumor cells. Also functions as an inhibitor of UV-induced apoptosis via suppression of the activity of c-Jun NH(2)-terminal kinase (JNK1). This is Serpin B3 (SERPINB3) from Homo sapiens (Human).